We begin with the raw amino-acid sequence, 78 residues long: MPKRILQGTVVSDKNDKTVVVRVERRFAHPILQKTVRRSKKYKAHDESNQFKVGDLVSIEECAPISKDKRWTVVSAQS.

This sequence belongs to the universal ribosomal protein uS17 family. In terms of assembly, part of the 30S ribosomal subunit.

In terms of biological role, one of the primary rRNA binding proteins, it binds specifically to the 5'-end of 16S ribosomal RNA. The polypeptide is Small ribosomal subunit protein uS17 (Sinorhizobium medicae (strain WSM419) (Ensifer medicae)).